Reading from the N-terminus, the 309-residue chain is NmrA-like family domain-containing protein 1 (309 aa).

NADP(+) is bound by residues 11 to 16 (GATGAQ), 37 to 41 (RNPEQ), 58 to 59 (DQ), 79 to 81 (TNY), K102, K143, and 165 to 168 (YFEN). The segment at 163–199 (PCYFENLLSYFLPQKAADGKSFLLDLPMGDVPMDGMS) is interaction with ASS1.

It belongs to the NmrA-type oxidoreductase family. As to quaternary structure, homodimer. Interacts with ASS1. Interaction is enhanced by low NADPH/NADP(+) ratios, which results in inhibition of ASS1 activity.

The protein resides in the cytoplasm. It localises to the perinuclear region. The protein localises to the nucleus. Its function is as follows. Redox sensor protein. Undergoes restructuring and subcellular redistribution in response to changes in intracellular NADPH/NADP(+) levels. At low NADPH concentrations the protein is found mainly as a monomer, and binds argininosuccinate synthase (ASS1), the enzyme involved in nitric oxide synthesis. Association with ASS1 impairs its activity and reduces the production of nitric oxide, which subsecuently prevents apoptosis. Under normal NADPH concentrations, the protein is found as a dimer and hides the binding site for ASS1. The homodimer binds one molecule of NADPH. Has higher affinity for NADPH than for NADP(+). Binding to NADPH is necessary to form a stable dimer. This is NmrA-like family domain-containing protein 1 (Nmral1) from Mus musculus (Mouse).